A 1058-amino-acid polypeptide reads, in one-letter code: Bromodomain-containing protein 1 (1058 aa).

The segment covering 1–12 (MRRKGRCHRGSA) has biased composition (basic residues). The interval 1–25 (MRRKGRCHRGSAARHPSSPCSIKHS) is disordered. The interval 31 to 80 (LTYAQAQRMVEIEIEGRLHRISIFDPLEIILEDDLTAQEMSECNSNKENS) is interaction with KAT7/HBO1 and histones. Ser-128 bears the Phosphoserine mark. The PHD-type 1 zinc finger occupies 214–264 (DAVCCICMDGECQNSNVILFCDMCNLAVHQECYGVPYIPEGQWLCRHCLQS). The C2HC pre-PHD-type zinc-finger motif lies at 268–301 (PADCVLCPNKGGAFKKTDDDRWGHVVCALWIPEV). The PHD-type 2 zinc finger occupies 325-389 (LTCYLCKQKG…RKTAYCDVHT (65 aa)). N6-acetyllysine is present on residues Lys-368, Lys-516, and Lys-519. Glycyl lysine isopeptide (Lys-Gly) (interchain with G-Cter in SUMO2) cross-links involve residues Lys-554 and Lys-594. The region spanning 562 to 666 (LRLTPLTVLL…DQGGVVLRQA (105 aa)) is the Bromo domain. The span at 754-763 (KLSQQHSQAP) shows a compositional bias: polar residues. Disordered regions lie at residues 754–776 (KLSQQHSQAPPTGAGTGGFEDEA) and 791–847 (LETL…AAPR). Position 803 is a phosphoserine (Ser-803). N6-acetyllysine is present on Lys-903. The PWWP domain maps to 929-1012 (PLKVVWAKCS…KSKMVPLGVD (84 aa)). 2 positions are modified to phosphoserine: Ser-1052 and Ser-1055.

Component of some HBO1 complexes composed of KAT7/HBO1, MEAF6, ING4 and BRD1/BRPF2. Component of the MOZ/MORF complex composed at least of ING5, KAT6A, KAT6B, MEAF6 and one of BRPF1, BRD1/BRPF2 and BRPF3. Interacts (via PHD-type zinc finger domain) with unmodified histone H3. Interacts (via PWWP domain) with dimethylated and trimethylated 'Lys-79' on histone H3.

The protein resides in the nucleus. The protein localises to the chromosome. In terms of biological role, scaffold subunit of various histone acetyltransferase (HAT) complexes, such as the MOZ/MORF and HBO1 complexes, that acts as a regulator of hematopoiesis. Plays a key role in HBO1 complex by directing KAT7/HBO1 specificity towards histone H3 'Lys-14' acetylation (H3K14ac), thereby promoting erythroid differentiation. The polypeptide is Bromodomain-containing protein 1 (Mus musculus (Mouse)).